Reading from the N-terminus, the 501-residue chain is Lysine--tRNA ligase (501 aa).

Positions 411 and 418 each coordinate Mg(2+).

Belongs to the class-II aminoacyl-tRNA synthetase family. In terms of assembly, homodimer. It depends on Mg(2+) as a cofactor.

Its subcellular location is the cytoplasm. The enzyme catalyses tRNA(Lys) + L-lysine + ATP = L-lysyl-tRNA(Lys) + AMP + diphosphate. This chain is Lysine--tRNA ligase, found in Clostridium perfringens (strain 13 / Type A).